Here is a 122-residue protein sequence, read N- to C-terminus: Cytochrome c-556 (122 aa).

Heme contacts are provided by M11, C111, C114, and H115. Positions 11, 111, 114, and 115 each coordinate heme c.

Monomer. In terms of processing, binds 1 heme c group covalently per subunit.

Low-spin monoheme cytochrome c. The protein is Cytochrome c-556 of Agrobacterium tumefaciens (strain B2A).